Reading from the N-terminus, the 577-residue chain is Aspartate--tRNA(Asp) ligase (577 aa).

E172 lines the L-aspartate pocket. The segment at 196–199 (QLFK) is aspartate. L-aspartate is bound at residue R218. ATP contacts are provided by residues 218 to 220 (RDE) and Q227. Residue H438 participates in L-aspartate binding. ATP is bound at residue E473. Residue R480 participates in L-aspartate binding. 525–528 (GFDR) is a binding site for ATP.

This sequence belongs to the class-II aminoacyl-tRNA synthetase family. Type 1 subfamily. As to quaternary structure, homodimer.

It localises to the cytoplasm. It catalyses the reaction tRNA(Asp) + L-aspartate + ATP = L-aspartyl-tRNA(Asp) + AMP + diphosphate. Catalyzes the attachment of L-aspartate to tRNA(Asp) in a two-step reaction: L-aspartate is first activated by ATP to form Asp-AMP and then transferred to the acceptor end of tRNA(Asp). Is specific for tRNA(Asp) since it cannot aspartylate tRNA(Asn). The chain is Aspartate--tRNA(Asp) ligase (aspS1) from Deinococcus radiodurans (strain ATCC 13939 / DSM 20539 / JCM 16871 / CCUG 27074 / LMG 4051 / NBRC 15346 / NCIMB 9279 / VKM B-1422 / R1).